The chain runs to 145 residues: Class I hydrophobin 1 (145 aa).

The N-terminal stretch at 1–18 is a signal peptide; it reads MYASVIIYTLVALCGVMS. Intrachain disulfides connect C88–C118, C95–C112, C96–C106, and C119–C128. N-linked (GlcNAc...) asparagine glycosylation is present at N108.

This sequence belongs to the fungal hydrophobin family. Self-assembles to form functional amyloid fibrils called rodlets. Self-assembly into fibrillar rodlets occurs spontaneously at hydrophobic:hydrophilic interfaces and the rodlets further associate laterally to form amphipathic monolayers.

It is found in the secreted. Its subcellular location is the cell wall. Functionally, aerial growth, conidiation, and dispersal of filamentous fungi in the environment rely upon a capability of their secreting small amphipathic proteins called hydrophobins (HPBs) with low sequence identity. Class I can self-assemble into an outermost layer of rodlet bundles on aerial cell surfaces, conferring cellular hydrophobicity that supports fungal growth, development and dispersal; whereas Class II form highly ordered films at water-air interfaces through intermolecular interactions but contribute nothing to the rodlet structure. Hyd1 is a class I hydrophobin that is involved in plant root attachment and colonization, and that might also protect the growing hyphae from locally synthesized plant defense compounds during the first stages of cucumber interaction, allowing this opportunistic, non-pathogenic fungus to colonize the intercellular spaces of the plant root. The chain is Class I hydrophobin 1 from Trichoderma asperellum (Filamentous fungus).